Reading from the N-terminus, the 175-residue chain is MVVYDLLVSLSKESIDVLRFVEANLAAFNQQYIFFNIQRKNSITTPLLITPQQEKISQIVDFLMDEYNKNNRRPSGPPREQPMHPLLPYQQSSDEQPMMPYQQPPGDDDQPYEQIYHKKHASQQVNTELSDYYQHILALGDEDKVMDSMLKLPEKAKRDDSDDEDSMFPIKKLTT.

Disordered stretches follow at residues 68–112 (NKNN…DQPY) and 153–175 (PEKAKRDDSDDEDSMFPIKKLTT). Residues 94–105 (DEQPMMPYQQPP) show a composition bias toward low complexity.

Belongs to the asfivirus H171R family.

Its subcellular location is the virion. This is an uncharacterized protein from African swine fever virus (isolate Tick/Malawi/Lil 20-1/1983) (ASFV).